The following is a 266-amino-acid chain: E3 ubiquitin-protein ligase RNF170 (266 aa).

Residues methionine 1–asparagine 26 are Lumenal-facing. A helical transmembrane segment spans residues alanine 27–cysteine 47. Over arginine 48–arginine 209 the chain is Cytoplasmic. The RING-type zinc finger occupies cysteine 88–arginine 131. The chain crosses the membrane as a helical span at residues isoleucine 210–glutamate 230. A topological domain (lumenal) is located at residue glycine 231. The chain crosses the membrane as a helical span at residues valine 232–isoleucine 252. Residues serine 253–glycine 266 are Cytoplasmic-facing.

In terms of tissue distribution, highly expressed in the developing brain, and less within intersomitic structures of the trunk.

It is found in the endoplasmic reticulum membrane. The catalysed reaction is S-ubiquitinyl-[E2 ubiquitin-conjugating enzyme]-L-cysteine + [acceptor protein]-L-lysine = [E2 ubiquitin-conjugating enzyme]-L-cysteine + N(6)-ubiquitinyl-[acceptor protein]-L-lysine.. It participates in protein modification; protein ubiquitination. Its function is as follows. E3 ubiquitin-protein ligase that plays an essential role in stimulus-induced inositol 1,4,5-trisphosphate receptor (ITPR) ubiquitination and degradation via the endoplasmic reticulum-associated degradation (ERAD) pathway. Also involved in ITPR turnover in resting cells. In Danio rerio (Zebrafish), this protein is E3 ubiquitin-protein ligase RNF170 (rnf170).